A 64-amino-acid chain; its full sequence is MAKNKGVRIVVTLECTECRSSTEKRSQGVSRYTTEKNRRNTTERLELKKFCPHDNKMTIHKEIK.

It belongs to the bacterial ribosomal protein bL33 family.

The sequence is that of Large ribosomal subunit protein bL33 from Synechococcus sp. (strain WH7803).